A 551-amino-acid polypeptide reads, in one-letter code: MSIVQTPAKRMTGGELGLILVFAALGFFSIVVAAKAYTPEYAFHAYLFAAASIATVFVIGNRYMDRPAELPPQTIDGKPNYNMAPVKVGTLLAVFWGIAGFLIGVIIALQMAYPLFNFDLPWISFGRLRPLHTSAVIFAFGGNVLIATSFYVVQRTSHARLAGYLAPWFVVLGYNFFIVIAGTGYLLGITQGKEYAEPEWYADLWLTIVWVTYFLVFLGTVLKRKEPHIYVANWFYLAFILTIAVLHLGNNAAIPVSVFSPKSYIVWSGVQDAMVQWWYGHNAVGFFLTAGFLALMYYFIPKRADKPVYSYRLSIVHFWALIFLYIWAGPHHLHYTALPDWAQTLGMTFSIMLWMPSWGGMINGLMTLSGAWDKLRTDPIIRMMVVAVAFYGMATFEGPMMSVKSVNSLSHYTEWGIGHVHSGALGWVAYISFGAIYCLIPWLWNKREMYSMKAIEWHFWVSTLGIVLYICAMWVAGILQGLMWRAYTALGFLEYSFIETVEAMHPLYVIRAIGGILFLAGSLIMAWNVFMTITRAETVSQPSGAALAPAE.

3 helical membrane-spanning segments follow: residues 14 to 34 (GELG…VVAA), 40 to 60 (EYAF…FVIG), and 88 to 108 (VGTL…VIIA). His132 is a binding site for heme b. The next 8 helical transmembrane spans lie at 133–153 (TSAV…FYVV), 169–189 (FVVL…LLGI), 202–222 (ADLW…GTVL), 229–249 (IYVA…LHLG), 280–300 (GHNA…YYFI), 313–333 (LSIV…PHHL), 345–365 (LGMT…INGL), and 383–403 (MMVV…MMSV). Cu cation contacts are provided by His281, His331, and His332. Heme b contacts are provided by His419 and His421. Helical transmembrane passes span 424-444 (ALGW…PWLW), 459-479 (FWVS…AGIL), and 513-533 (IGGI…FMTI).

The protein belongs to the heme-copper respiratory oxidase family. Cu(2+) serves as cofactor. Requires heme b as cofactor.

It localises to the cell membrane. The catalysed reaction is 4 Fe(II)-[cytochrome c] + O2 + 8 H(+)(in) = 4 Fe(III)-[cytochrome c] + 2 H2O + 4 H(+)(out). It functions in the pathway energy metabolism; oxidative phosphorylation. Cytochrome c oxidase is the component of the respiratory chain that catalyzes the reduction of oxygen to water. Subunits 1-3 form the functional core of the enzyme complex. Co I is the catalytic subunit of the enzyme. Electrons originating in cytochrome c or a quinol are transferred to the bimetallic center formed by a high-spin heme and copper B. The protein is Cytochrome c oxidase subunit 1 homolog (fixN) of Azorhizobium caulinodans (strain ATCC 43989 / DSM 5975 / JCM 20966 / LMG 6465 / NBRC 14845 / NCIMB 13405 / ORS 571).